Reading from the N-terminus, the 421-residue chain is FBD-associated F-box protein At5g56370 (421 aa).

One can recognise an F-box domain in the interval methionine 1–asparagine 52. An FBD domain is found at histidine 332–proline 382.

The sequence is that of FBD-associated F-box protein At5g56370 from Arabidopsis thaliana (Mouse-ear cress).